A 557-amino-acid polypeptide reads, in one-letter code: 2-succinyl-5-enolpyruvyl-6-hydroxy-3-cyclohexene-1-carboxylate synthase (557 aa).

This sequence belongs to the TPP enzyme family. MenD subfamily. Homodimer. Mg(2+) is required as a cofactor. Mn(2+) serves as cofactor. It depends on thiamine diphosphate as a cofactor.

The enzyme catalyses isochorismate + 2-oxoglutarate + H(+) = 5-enolpyruvoyl-6-hydroxy-2-succinyl-cyclohex-3-ene-1-carboxylate + CO2. The protein operates within quinol/quinone metabolism; 1,4-dihydroxy-2-naphthoate biosynthesis; 1,4-dihydroxy-2-naphthoate from chorismate: step 2/7. It functions in the pathway quinol/quinone metabolism; menaquinone biosynthesis. Functionally, catalyzes the thiamine diphosphate-dependent decarboxylation of 2-oxoglutarate and the subsequent addition of the resulting succinic semialdehyde-thiamine pyrophosphate anion to isochorismate to yield 2-succinyl-5-enolpyruvyl-6-hydroxy-3-cyclohexene-1-carboxylate (SEPHCHC). In Staphylococcus aureus (strain MSSA476), this protein is 2-succinyl-5-enolpyruvyl-6-hydroxy-3-cyclohexene-1-carboxylate synthase.